The chain runs to 233 residues: Cilia- and flagella-associated protein 299 (233 aa).

In terms of tissue distribution, abundantly expressed in testis, specifically in spermatogonia and primary spermatocytes but not in secondary spermatocytes and spermatids.

Its subcellular location is the cytoplasm. It localises to the nucleus. Functionally, may be involved in spermatogenesis. The sequence is that of Cilia- and flagella-associated protein 299 from Mus musculus (Mouse).